The sequence spans 295 residues: Bifunctional protein FolD (295 aa).

NADP(+)-binding positions include 172 to 174, serine 197, and isoleucine 238; that span reads GRS.

It belongs to the tetrahydrofolate dehydrogenase/cyclohydrolase family. As to quaternary structure, homodimer.

The catalysed reaction is (6R)-5,10-methylene-5,6,7,8-tetrahydrofolate + NADP(+) = (6R)-5,10-methenyltetrahydrofolate + NADPH. The enzyme catalyses (6R)-5,10-methenyltetrahydrofolate + H2O = (6R)-10-formyltetrahydrofolate + H(+). The protein operates within one-carbon metabolism; tetrahydrofolate interconversion. Functionally, catalyzes the oxidation of 5,10-methylenetetrahydrofolate to 5,10-methenyltetrahydrofolate and then the hydrolysis of 5,10-methenyltetrahydrofolate to 10-formyltetrahydrofolate. The protein is Bifunctional protein FolD of Rickettsia akari (strain Hartford).